The primary structure comprises 182 residues: Adenylate kinase (182 aa).

12 to 17 (GAGKGT) lines the ATP pocket. The NMP stretch occupies residues 32 to 61 (STGDLLRAEVGAKTPLGQEAAAVMNRGELV). AMP is bound by residues Thr33, Arg38, 59–61 (ELV), 85–88 (GFPR), and Gln92. Positions 126–132 (SRGRSDD) are LID. Arg127 serves as a coordination point for ATP. Residues Arg129 and Arg140 each coordinate AMP. Gly168 serves as a coordination point for ATP.

This sequence belongs to the adenylate kinase family. As to quaternary structure, monomer.

It localises to the cytoplasm. The catalysed reaction is AMP + ATP = 2 ADP. It participates in purine metabolism; AMP biosynthesis via salvage pathway; AMP from ADP: step 1/1. In terms of biological role, catalyzes the reversible transfer of the terminal phosphate group between ATP and AMP. Plays an important role in cellular energy homeostasis and in adenine nucleotide metabolism. The sequence is that of Adenylate kinase from Prochlorococcus marinus (strain MIT 9303).